The sequence spans 279 residues: Energy-coupling factor transporter ATP-binding protein EcfA1 (279 aa).

Residues 6 to 240 (VRLEHVFYKY…ADAMREIGLG (235 aa)) enclose the ABC transporter domain. 40-47 (GHNGSGKS) contributes to the ATP binding site.

This sequence belongs to the ABC transporter superfamily. Energy-coupling factor EcfA family. In terms of assembly, forms a stable energy-coupling factor (ECF) transporter complex composed of 2 membrane-embedded substrate-binding proteins (S component), 2 ATP-binding proteins (A component) and 2 transmembrane proteins (T component).

It is found in the cell membrane. In terms of biological role, ATP-binding (A) component of a common energy-coupling factor (ECF) ABC-transporter complex. Unlike classic ABC transporters this ECF transporter provides the energy necessary to transport a number of different substrates. The polypeptide is Energy-coupling factor transporter ATP-binding protein EcfA1 (Listeria monocytogenes serovar 1/2a (strain ATCC BAA-679 / EGD-e)).